Reading from the N-terminus, the 95-residue chain is uncharacterized protein (95 aa).

A helical transmembrane segment spans residues 27–47 (SFGLAIIGILLIACEIILFLT).

The protein resides in the membrane. This is an uncharacterized protein from Homo sapiens (Human).